A 191-amino-acid polypeptide reads, in one-letter code: Putative NADH dehydrogenase/NAD(P)H nitroreductase (191 aa).

127-132 contacts NAD(+); the sequence is AAHSLG.

The protein belongs to the nitroreductase family. It depends on FMN as a cofactor.

This Methanothermobacter thermautotrophicus (strain ATCC 29096 / DSM 1053 / JCM 10044 / NBRC 100330 / Delta H) (Methanobacterium thermoautotrophicum) protein is Putative NADH dehydrogenase/NAD(P)H nitroreductase.